The primary structure comprises 36 residues: Pancreatic polypeptide (36 aa).

Tyrosine amide is present on Tyr-36.

Belongs to the NPY family.

The protein resides in the secreted. In terms of biological role, hormone secreted by pancreatic cells that acts as a regulator of pancreatic and gastrointestinal functions. The protein is Pancreatic polypeptide (PPY) of Larus argentatus (Herring gull).